Reading from the N-terminus, the 238-residue chain is Uridylate kinase (238 aa).

12–15 (KLSG) lines the ATP pocket. Residue Gly-54 participates in UMP binding. ATP contacts are provided by Gly-55 and Arg-59. UMP-binding positions include Asp-74 and 135 to 142 (TGNPYFTT). ATP contacts are provided by Thr-162, Asn-163, Tyr-168, and Asp-171.

The protein belongs to the UMP kinase family. Homohexamer.

It is found in the cytoplasm. The catalysed reaction is UMP + ATP = UDP + ADP. Its pathway is pyrimidine metabolism; CTP biosynthesis via de novo pathway; UDP from UMP (UMPK route): step 1/1. With respect to regulation, inhibited by UTP. Functionally, catalyzes the reversible phosphorylation of UMP to UDP. The chain is Uridylate kinase from Nitrobacter hamburgensis (strain DSM 10229 / NCIMB 13809 / X14).